A 536-amino-acid chain; its full sequence is Chaperonin GroEL (536 aa).

Residues 29-32, 86-90, glycine 412, and aspartate 493 each bind ATP; these read TLGP and DGTTT.

The protein belongs to the chaperonin (HSP60) family. Forms a cylinder of 14 subunits composed of two heptameric rings stacked back-to-back. Interacts with the co-chaperonin GroES.

The protein localises to the cytoplasm. The enzyme catalyses ATP + H2O + a folded polypeptide = ADP + phosphate + an unfolded polypeptide.. Functionally, together with its co-chaperonin GroES, plays an essential role in assisting protein folding. The GroEL-GroES system forms a nano-cage that allows encapsulation of the non-native substrate proteins and provides a physical environment optimized to promote and accelerate protein folding. The sequence is that of Chaperonin GroEL from Onion yellows phytoplasma (strain OY-M).